The primary structure comprises 278 residues: Cysteine-rich repeat secretory protein 18 (278 aa).

The first 32 residues, 1 to 32 (MYSSSSVSKRFVLVPIVVVVTTQLLLVRNVSS), serve as a signal peptide directing secretion. 2 consecutive Gnk2-homologous domains span residues 39–147 (YLHH…SLDT) and 160–267 (PSAK…LYPF).

Belongs to the cysteine-rich repeat secretory protein family.

It localises to the secreted. The sequence is that of Cysteine-rich repeat secretory protein 18 (CRRSP18) from Arabidopsis thaliana (Mouse-ear cress).